Here is a 209-residue protein sequence, read N- to C-terminus: Probable phosphatidylglycerophosphate synthase (209 aa).

The next 4 membrane-spanning stretches (helical) occupy residues 32–52, 105–125, 147–167, and 171–191; these read ILTL…FYGG, ALIG…LILT, WGGK…VLPL, and LHVA…ITGV.

This sequence belongs to the CDP-alcohol phosphatidyltransferase class-I family.

The protein localises to the cell membrane. The enzyme catalyses a CDP-1,2-diacyl-sn-glycerol + sn-glycerol 3-phosphate = a 1,2-diacyl-sn-glycero-3-phospho-(1'-sn-glycero-3'-phosphate) + CMP + H(+). It participates in lipid metabolism; phospholipid metabolism. Functionally, probably catalyzes the synthesis of phosphatidylglycerophosphate by transferring a phosphatidyl group from CDP-diacylglycerol to glycerol 3-phosphate. The chain is Probable phosphatidylglycerophosphate synthase from Mycobacterium tuberculosis (strain CDC 1551 / Oshkosh).